Consider the following 278-residue polypeptide: 2-dehydro-3-deoxyphosphooctonate aldolase (278 aa).

Belongs to the KdsA family.

It localises to the cytoplasm. It catalyses the reaction D-arabinose 5-phosphate + phosphoenolpyruvate + H2O = 3-deoxy-alpha-D-manno-2-octulosonate-8-phosphate + phosphate. The protein operates within carbohydrate biosynthesis; 3-deoxy-D-manno-octulosonate biosynthesis; 3-deoxy-D-manno-octulosonate from D-ribulose 5-phosphate: step 2/3. It participates in bacterial outer membrane biogenesis; lipopolysaccharide biosynthesis. This is 2-dehydro-3-deoxyphosphooctonate aldolase from Fusobacterium nucleatum subsp. nucleatum (strain ATCC 25586 / DSM 15643 / BCRC 10681 / CIP 101130 / JCM 8532 / KCTC 2640 / LMG 13131 / VPI 4355).